The primary structure comprises 4753 residues: Dynein heavy chain domain-containing protein 1 (4753 aa).

Coiled-coil stretches lie at residues 826–858 (IHAI…ALHE) and 936–991 (KLQQ…LSEL). Residues 2688–2766 (HLGKDHQESE…SRGMKESISH (79 aa)) form a disordered region. Over residues 2695–2712 (ESEEEEEEERVPEVESEG) the composition is skewed to acidic residues. Residues 2740–2751 (RVSNSRDPSLTP) are compositionally biased toward polar residues. Coiled coils occupy residues 3125-3227 (LQQQ…MSKA), 3590-3651 (MRNQ…QGSK), and 4431-4460 (GAQL…LTHV). Positions 3580–3657 (ALTEGRGKGL…QGSKPAYETQ (78 aa)) are disordered. A compositionally biased stretch (acidic residues) spans 3602 to 3615 (KEEDDESEESNEAE). Residues 3616–3631 (DQTKEQKAEERKNEQE) are compositionally biased toward basic and acidic residues. The span at 3632 to 3641 (KEQEENEEKE) shows a compositional bias: acidic residues. The interval 4669 to 4697 (ALQDSPSSQPSPLPPVSISTQAPGTSDLP) is disordered.

It belongs to the dynein heavy chain family. As to expression, expressed in spermatozoa (at protein level).

Its subcellular location is the cell projection. The protein localises to the cilium. The protein resides in the flagellum. In terms of biological role, essential for the normal assembly and function of sperm flagella axonemes. This chain is Dynein heavy chain domain-containing protein 1 (DNHD1), found in Homo sapiens (Human).